We begin with the raw amino-acid sequence, 527 residues long: Berberine bridge enzyme-like 8 (527 aa).

The N-terminal stretch at 1-20 (MKYALILVLFFVVFIWQSSS) is a signal peptide. A disulfide bond links Cys31 and Cys93. N-linked (GlcNAc...) asparagine glycosylation is found at Asn51 and Asn68. The region spanning 71–247 (STPKPFLIIA…LAYKINLVEV (177 aa)) is the FAD-binding PCMH-type domain. A cross-link (6-(S-cysteinyl)-8alpha-(pros-histidyl)-FAD (His-Cys)) is located at residues 108–172 (HDYDGLSYVT…KTLAYPAGIC (65 aa)). 3 N-linked (GlcNAc...) asparagine glycosylation sites follow: Asn250, Asn263, and Asn292.

It belongs to the oxygen-dependent FAD-linked oxidoreductase family. FAD serves as cofactor. The FAD cofactor is bound via a bicovalent 6-S-cysteinyl, 8alpha-N1-histidyl FAD linkage.

The protein localises to the secreted. It is found in the cell wall. This is Berberine bridge enzyme-like 8 from Arabidopsis thaliana (Mouse-ear cress).